The sequence spans 618 residues: Protease 4 (618 aa).

Over 1 to 24 the chain is Cytoplasmic; the sequence is MRTLWRFIAGFFKWTWRVLNFVRE. The helical transmembrane segment at 25 to 45 threads the bilayer; it reads MVLNLFFIFLVLVGVGIWMQI. At 46–618 the chain is on the periplasmic side; sequence GNGSNSEQTA…AFCLTCANVR (573 aa). Lys-209 functions as the Proton donor/acceptor in the catalytic mechanism. Ser-409 functions as the Nucleophile in the catalytic mechanism.

This sequence belongs to the peptidase S49 family. Homotetramer.

Its subcellular location is the cell inner membrane. In terms of biological role, digests cleaved signal peptides in vitro, its in vivo function is unknown. This activity is necessary to maintain proper secretion of mature proteins across the membrane. The polypeptide is Protease 4 (sppA) (Salmonella typhi).